The primary structure comprises 142 residues: Large ribosomal subunit protein uL13 (142 aa).

Belongs to the universal ribosomal protein uL13 family. In terms of assembly, part of the 50S ribosomal subunit.

Functionally, this protein is one of the early assembly proteins of the 50S ribosomal subunit, although it is not seen to bind rRNA by itself. It is important during the early stages of 50S assembly. This is Large ribosomal subunit protein uL13 from Buchnera aphidicola subsp. Schizaphis graminum (strain Sg).